The sequence spans 85 residues: Alpha-insect toxin Bot14 (85 aa).

A signal peptide spans 1–18 (MSSLMISTAMKGKAPYRQ). Residues 20–84 (RDGYIAQPHN…GIIVHGEKCH (65 aa)) enclose the LCN-type CS-alpha/beta domain. Intrachain disulfides connect cysteine 30–cysteine 83, cysteine 34–cysteine 55, cysteine 41–cysteine 65, and cysteine 45–cysteine 67.

Belongs to the long (4 C-C) scorpion toxin superfamily. Sodium channel inhibitor family. Alpha subfamily. Expressed by the venom gland.

It localises to the secreted. In terms of biological role, alpha toxins bind voltage-independently at site-3 of sodium channels (Nav) and inhibit the inactivation of the activated channels, thereby blocking neuronal transmission. This toxin is active only on insects. The protein is Alpha-insect toxin Bot14 of Buthus occitanus tunetanus (Common European scorpion).